We begin with the raw amino-acid sequence, 422 residues long: Osteomodulin (422 aa).

Positions 1-20 (MGFSSLVCVLFFFLGVKVYC) are cleaved as a signal peptide. Positions 21–27 (QYESYQW) are excised as a propeptide. 6 positions are modified to sulfotyrosine: Y22, Y25, Y31, Y39, Y51, and Y77. One can recognise an LRRNT domain in the interval 53 to 91 (APFHQHTLGCASECFCPPNFPSSMYCDNRKLKTIPNIPA). LRR repeat units lie at residues 92–113 (HIQQVYLQFNEIEAVTADSFIN), 116–129 (HLKEINLSHNKIKS), 142–164 (NLLQLHLQHNNLEDFPFPLPKSL), 165–184 (ERIFLGYNEISRLQTNAVNG), 187–207 (NLTMLDLCFNKIDDSVLQEKV), 213–233 (KLMQLNLCNNRLESMPPGLPS), 234–255 (SLMYLSLENNSISSIPENYFNK), 258–280 (KLHALRISHNKLQDIPYNIFNLS), 281–294 (NLIELNVGHNKLKQ), 301–322 (NLEHLYLENNEIENVNVTVMCP), and 331–353 (HLTHIRIDQNKLKAPISSYIFLC). N-linked (GlcNAc...) asparagine glycans are attached at residues N113 and N121. N187 is a glycosylation site (N-linked (GlcNAc...) asparagine). N242 and N278 each carry an N-linked (GlcNAc...) asparagine glycan. The N-linked (GlcNAc...) asparagine glycan is linked to N316. Cysteines 321 and 353 form a disulfide. The interval 385–422 (DDGDSEDHDDHHEGPEEEGTEENIDAHYYGSQEWQETI) is disordered. A sulfotyrosine mark is found at Y412 and Y413.

The protein belongs to the small leucine-rich proteoglycan (SLRP) family. SLRP class II subfamily. In terms of assembly, binds the alpha(V)beta(3)-integrin. The N-terminus is blocked. In terms of processing, glycosylated; contains keratan sulfate. Post-translationally, sulfated on tyrosine residue(s). As to expression, bone specific (at protein level).

The protein resides in the secreted. It localises to the extracellular space. Its subcellular location is the extracellular matrix. Functionally, may be implicated in biomineralization processes. Has a function in binding of osteoblasts via the alpha(V)beta(3)-integrin. This Bos taurus (Bovine) protein is Osteomodulin (OMD).